The chain runs to 386 residues: Palmitoyltransferase ZDHHC9 (386 aa).

The Cytoplasmic portion of the chain corresponds to 1-35; it reads MSAVMITRKITRKWEKLPGKNTFCCDGRVMMARQK. The helical transmembrane segment at 36–56 threads the bilayer; it reads GVFYLTLFLIVGTCSLFFAFE. The Lumenal portion of the chain corresponds to 57-63; it reads CPYLAVH. The chain crosses the membrane as a helical span at residues 64–84; it reads LSPAIPVFAVLLFVFVMAMLL. The Cytoplasmic segment spans residues 85–183; that stretch reads RTSFSDPGVL…NCVGKRNYRY (99 aa). The DHHC domain maps to 139 to 189; that stretch reads KYCYTCKIFRPPRASHCSICDNCVDRFDHHCPWVGNCVGKRNYRYFYLFTL. The S-palmitoyl cysteine intermediate role is filled by cysteine 169. The chain crosses the membrane as a helical span at residues 184 to 204; the sequence is FYLFTLSLSLLTIYIFAFDIV. Residues 205-224 lie on the Lumenal side of the membrane; sequence HVVLRSVDSGFVNTLKETPG. Residues 225–245 traverse the membrane as a helical segment; that stretch reads TVLEVLVCFFTLWSVVGLTGF. The Cytoplasmic segment spans residues 246-386; sequence HTYLISLNQT…APAVIKESTH (141 aa). Residues 306 to 334 show a composition bias toward polar residues; sequence SCSSAPSNGATTVPVNKSSNPATQTTKSS. Residues 306-386 form a disordered region; the sequence is SCSSAPSNGA…APAVIKESTH (81 aa).

Belongs to the DHHC palmitoyltransferase family. ERF2/ZDHHC9 subfamily.

It is found in the endoplasmic reticulum membrane. Its subcellular location is the golgi apparatus membrane. It carries out the reaction L-cysteinyl-[protein] + hexadecanoyl-CoA = S-hexadecanoyl-L-cysteinyl-[protein] + CoA. Palmitoyltransferase that catalyzes the addition of palmitate onto various protein substrates, such as ADRB2, GSDMD, HRAS, NRAS and CGAS. The sequence is that of Palmitoyltransferase ZDHHC9 from Danio rerio (Zebrafish).